Consider the following 469-residue polypeptide: 6-phospho-beta-galactosidase (469 aa).

Q18, H115, N158, E159, and N296 together coordinate D-galactose 6-phosphate. The active-site Proton donor is E159. E374 (nucleophile) is an active-site residue. D-galactose 6-phosphate contacts are provided by S429, W430, K436, and Y438.

It belongs to the glycosyl hydrolase 1 family.

It catalyses the reaction a 6-phospho-beta-D-galactoside + H2O = D-galactose 6-phosphate + an alcohol. It participates in carbohydrate metabolism; lactose degradation; D-galactose 6-phosphate and beta-D-glucose from lactose 6-phosphate: step 1/1. The sequence is that of 6-phospho-beta-galactosidase from Staphylococcus haemolyticus (strain JCSC1435).